Consider the following 315-residue polypeptide: tRNA wybutosine-synthesizing protein 5 (315 aa).

The JmjC domain maps to 102–267 (DEKYYLRSLG…YDKTDTYGNK (166 aa)). Tyrosine 106 contacts 2-oxoglutarate. The Fe cation site is built by histidine 160 and aspartate 162. 2-oxoglutarate contacts are provided by asparagine 166 and lysine 175. Histidine 235 contacts Fe cation.

It belongs to the TYW5 family. In terms of assembly, homodimer. It depends on Fe(2+) as a cofactor.

The catalysed reaction is 7-[(3S)-3-amino-3-carboxypropyl]wyosine(37) in tRNA(Phe) + 2-oxoglutarate + O2 = 7-(2-hydroxy-3-amino-3-carboxypropyl)wyosine(37) in tRNA(Phe) + succinate + CO2. It functions in the pathway tRNA modification; wybutosine-tRNA(Phe) biosynthesis. Functionally, tRNA hydroxylase that acts as a component of the wybutosine biosynthesis pathway. Wybutosine is a hyper modified guanosine with a tricyclic base found at the 3'-position adjacent to the anticodon of eukaryotic phenylalanine tRNA. Catalyzes the hydroxylation of 7-(a-amino-a-carboxypropyl)wyosine (yW-72) into undermodified hydroxywybutosine (OHyW*). OHyW* being further transformed into hydroxywybutosine (OHyW) by LCMT2/TYW4. OHyW is a derivative of wybutosine found in higher eukaryotes. The protein is tRNA wybutosine-synthesizing protein 5 (TYW5) of Homo sapiens (Human).